Here is a 538-residue protein sequence, read N- to C-terminus: Aldehyde dehydrogenase family 2 member B4, mitochondrial (538 aa).

The transit peptide at 1–38 (MAARRVSSLLSRSFSASSPLLFRSQGRNCYNGGILRRF) directs the protein to the mitochondrion. 282–287 (GSTDTG) is a binding site for NAD(+). Catalysis depends on E305, which acts as the Proton acceptor. The Nucleophile role is filled by C339.

Belongs to the aldehyde dehydrogenase family. Homotetramer.

It is found in the mitochondrion matrix. The catalysed reaction is an aldehyde + NAD(+) + H2O = a carboxylate + NADH + 2 H(+). Possesses activity on acetaldehyde and glycolaldehyde in vitro. In Arabidopsis thaliana (Mouse-ear cress), this protein is Aldehyde dehydrogenase family 2 member B4, mitochondrial (ALDH2B4).